We begin with the raw amino-acid sequence, 598 residues long: Transcription factor himD (598 aa).

Residues 18–47 constitute a DNA-binding region (zn(2)-C6 fungal-type); sequence CQNCARAKIRCIRSVPTGSCDRCERLRKTC. The interval 87–110 is disordered; it reads TVSEASIDDKSPTTTPTTPRPPPD.

The protein resides in the nucleus. Transcription factor that, with himB, probably co-regulates the him gene cluster that mediates the biosynthesis of himeic acid A, a ubiquitin-activating enzyme (E1) inhibitor. In Aspergillus japonicus, this protein is Transcription factor himD.